The primary structure comprises 87 residues: Cytochrome c oxidase assembly factor 3, mitochondrial (87 aa).

A helical transmembrane segment spans residues 47–69 (NNLLTAGALGVSVLAIYGYSIFS).

Belongs to the COA3 family.

Its subcellular location is the mitochondrion membrane. Plays a critical role in the biogenesis and activity of cytochrome c oxidase (COX) (complex IV). The polypeptide is Cytochrome c oxidase assembly factor 3, mitochondrial (Ccdc56) (Drosophila melanogaster (Fruit fly)).